We begin with the raw amino-acid sequence, 122 residues long: Small ribosomal subunit protein uS13 (122 aa).

Residues 94 to 122 form a disordered region; it reads GLPVRGQSTQKNARTRKGPRKTVAGKKGK. Positions 106-122 are enriched in basic residues; sequence ARTRKGPRKTVAGKKGK.

It belongs to the universal ribosomal protein uS13 family. As to quaternary structure, part of the 30S ribosomal subunit. Forms a loose heterodimer with protein S19. Forms two bridges to the 50S subunit in the 70S ribosome.

Located at the top of the head of the 30S subunit, it contacts several helices of the 16S rRNA. In the 70S ribosome it contacts the 23S rRNA (bridge B1a) and protein L5 of the 50S subunit (bridge B1b), connecting the 2 subunits; these bridges are implicated in subunit movement. Contacts the tRNAs in the A and P-sites. The protein is Small ribosomal subunit protein uS13 of Mycoplasmopsis synoviae (strain 53) (Mycoplasma synoviae).